The primary structure comprises 638 residues: Actin-regulating kinase 1 (638 aa).

The Protein kinase domain maps to 22 to 298 (VEIIKYLTSG…VYQLLKRISI (277 aa)). ATP-binding positions include 28–36 (LTSGGFAQV) and K56. D159 serves as the catalytic Proton acceptor. A Phosphoserine modification is found at S478. The segment covering 482-515 (YSTRGNIKKNQSVKESLTSSSLPGTSFTPTSTKV) has biased composition (polar residues). Residues 482–518 (YSTRGNIKKNQSVKESLTSSSLPGTSFTPTSTKVNLK) are disordered. S522 and S535 each carry phosphoserine. The disordered stretch occupies residues 569–638 (SEESFNARKM…LAGRKLSLDK (70 aa)). The span at 582–593 (KLHEKGEIDKPT) shows a compositional bias: basic and acidic residues. An interaction with SH3 domain of ABP1 region spans residues 602-615 (SKDKKTKPTPPPKP).

It belongs to the protein kinase superfamily. Ser/Thr protein kinase family. Interacts with ABP1, which is required for proper actin patch localization.

The protein resides in the cytoplasm. It is found in the cytoskeleton. The protein localises to the actin patch. It carries out the reaction L-seryl-[protein] + ATP = O-phospho-L-seryl-[protein] + ADP + H(+). The catalysed reaction is L-threonyl-[protein] + ATP = O-phospho-L-threonyl-[protein] + ADP + H(+). Functionally, involved in regulation of actin cytoskeleton organization and endocytosis. The polypeptide is Actin-regulating kinase 1 (ARK1) (Saccharomyces cerevisiae (strain ATCC 204508 / S288c) (Baker's yeast)).